Here is a 161-residue protein sequence, read N- to C-terminus: tRNA-specific adenosine deaminase (161 aa).

One can recognise a CMP/dCMP-type deaminase domain in the interval 2–120; sequence TQDELYMKEA…GTLMNLLQEE (119 aa). His53 is a Zn(2+) binding site. Glu55 functions as the Proton donor in the catalytic mechanism. 2 residues coordinate Zn(2+): Cys83 and Cys86.

The protein belongs to the cytidine and deoxycytidylate deaminase family. In terms of assembly, homodimer. Zn(2+) is required as a cofactor.

It catalyses the reaction adenosine(34) in tRNA + H2O + H(+) = inosine(34) in tRNA + NH4(+). Catalyzes the deamination of adenosine to inosine at the wobble position 34 of tRNA(Arg2). The chain is tRNA-specific adenosine deaminase from Bacillus subtilis (strain 168).